A 111-amino-acid polypeptide reads, in one-letter code: Prothymosin alpha (111 aa).

An N-acetylmethionine modification is found at Met1. The disordered stretch occupies residues 1-111 (MSDAAVDTSS…TKKQKTDEDD (111 aa)). An N-acetylserine; in Prothymosin alpha, N-terminally processed modification is found at Ser2. Residue Ser2 is modified to Phosphoserine. Thr8 carries the phosphothreonine modification. Residues Ser9 and Ser10 each carry the phosphoserine modification. 2 positions are modified to phosphothreonine: Thr13 and Thr14. Residues 13 to 31 (TTKDLKEKKEVVEEAENGR) are compositionally biased toward basic and acidic residues. Position 15 is an N6-acetyllysine; alternate (Lys15). Lys15 carries the post-translational modification N6-succinyllysine; alternate. The segment covering 40–84 (ENEENGEQEADNEVDEEEEEGGEEEEEEEEGDGEEEDGDEDEEAE) has biased composition (acidic residues). Residues 101-111 (DTKKQKTDEDD) are compositionally biased toward basic and acidic residues. The residue at position 102 (Thr102) is a Phosphothreonine. Lys103 is subject to N6-acetyllysine; alternate. Lys103 is covalently cross-linked (Glycyl lysine isopeptide (Lys-Gly) (interchain with G-Cter in SUMO2); alternate). Thr107 is modified (phosphothreonine).

Belongs to the pro/parathymosin family. Interacts with NUPR1; regulates apoptotic process. In terms of processing, covalently linked to a small RNA of about 20 nucleotides.

The protein resides in the nucleus. In terms of biological role, prothymosin alpha may mediate immune function by conferring resistance to certain opportunistic infections. The polypeptide is Prothymosin alpha (PTMA) (Homo sapiens (Human)).